The sequence spans 318 residues: MRKSGCAVCSRSIGWVGLAVSTVLMVMKAFVGLIGGSQAMLADAMYSLKDMLNALMVIIGTTISSKPLDAEHPYGHGKVEFILSMVVSVVFIVLTGYLLVHAVQILLDESLHRTPHLIVLWAALVSIGVNVGMYFYSRCVAIETNSPLIKTMAKHHHGDATASGAVALGIIGAHYLNMPWIDPAVALWETIDLLLLGKVVFMDAYRGLMDHTAGEAVQNRIVEAAERVPGVRGVIHLRARYVGQDIWADMIIGVDPENTVEQAHEICEAVQAAVCGKIRRIESLHVSAEAREIGDTTKPSFSDQPLSFDEVMLSKVDN.

Positions 1 to 210 (MRKSGCAVCS…FMDAYRGLMD (210 aa)) are transmembrane domain (TMD). The next 4 helical transmembrane spans lie at 13–33 (IGWVGLAVSTVLMVMKAFVGL), 39–59 (AMLADAMYSLKDMLNALMVII), 81–101 (FILSMVVSVVFIVLTGYLLVH), and 117–137 (LIVLWAALVSIGVNVGMYFYS). The interval 211-318 (HTAGEAVQNR…DEVMLSKVDN (108 aa)) is C-terminal domain (CTD). Positions 249, 264, 285, and 289 each coordinate Fe cation.

Belongs to the cation diffusion facilitator (CDF) transporter (TC 2.A.4) family. Forms homodimers via its C-terminal domain (CTD) in the presence of metal cations. Interacts with MamB via their CTD. Isolated CTD forms homodimers.

The protein localises to the magnetosome membrane. It is found in the cell inner membrane. In terms of biological role, essential for magnetosome formation; required for stable accumulation of MamB. May nucleate iron crystal formation. Probably binds and transports iron. Binds divalent cations, possibly up to 3 Zn(2+) per dimer in vitro, probably iron in vivo. One of 7 genes (mamLQBIEMO) able to induce magnetosome membrane biogenesis; coexpression of mamLQRBIEMO in a deletion of the 17 gene mamAB operon restores magnetosome vesicle formation but not magnetite biosynthesis. The sequence is that of Magnetosome protein MamM from Magnetospirillum gryphiswaldense (strain DSM 6361 / JCM 21280 / NBRC 15271 / MSR-1).